A 148-amino-acid chain; its full sequence is D-aminoacyl-tRNA deacylase (148 aa).

The Gly-cisPro motif, important for rejection of L-amino acids signature appears at 137–138 (GP).

It belongs to the DTD family. In terms of assembly, homodimer.

It localises to the cytoplasm. The catalysed reaction is glycyl-tRNA(Ala) + H2O = tRNA(Ala) + glycine + H(+). It catalyses the reaction a D-aminoacyl-tRNA + H2O = a tRNA + a D-alpha-amino acid + H(+). Functionally, an aminoacyl-tRNA editing enzyme that deacylates mischarged D-aminoacyl-tRNAs. Also deacylates mischarged glycyl-tRNA(Ala), protecting cells against glycine mischarging by AlaRS. Acts via tRNA-based rather than protein-based catalysis; rejects L-amino acids rather than detecting D-amino acids in the active site. By recycling D-aminoacyl-tRNA to D-amino acids and free tRNA molecules, this enzyme counteracts the toxicity associated with the formation of D-aminoacyl-tRNA entities in vivo and helps enforce protein L-homochirality. The chain is D-aminoacyl-tRNA deacylase from Aquifex aeolicus (strain VF5).